The primary structure comprises 332 residues: Cinnamoyl-CoA reductase 2 (332 aa).

Residues 12–18 (GAGGYIA), R37, K43, 63–64 (DL), 83–85 (TAS), Y156, K160, 183–186 (PVLV), and S198 contribute to the NADP(+) site. C149 and C157 form a disulfide bridge. K160 (proton donor) is an active-site residue.

This sequence belongs to the NAD(P)-dependent epimerase/dehydratase family. Dihydroflavonol-4-reductase subfamily. As to expression, expressed at low levels in leaves, stems and flowers.

It catalyses the reaction (E)-cinnamaldehyde + NADP(+) + CoA = (E)-cinnamoyl-CoA + NADPH + H(+). Its pathway is aromatic compound metabolism; phenylpropanoid biosynthesis. In terms of biological role, cinnamoyl-CoA reductase probably involved in the formation of phenolic compounds associated with the hypersensitive response. Seems not to be involved in lignin biosynthesis. This is Cinnamoyl-CoA reductase 2 (CCR2) from Arabidopsis thaliana (Mouse-ear cress).